Consider the following 320-residue polypeptide: ATP-dependent 6-phosphofructokinase (320 aa).

Residue Gly-12 participates in ATP binding. Residues 22 to 26 (RGVVR) and 55 to 60 (RYSVSD) each bind ADP. ATP is bound by residues 73–74 (RF) and 103–106 (GDGS). A Mg(2+)-binding site is contributed by Asp-104. 126-128 (TID) is a binding site for substrate. Asp-128 functions as the Proton acceptor in the catalytic mechanism. Position 155 (Arg-155) interacts with ADP. Residues Arg-163 and 170-172 (MGR) each bind substrate. ADP is bound by residues 186–188 (GCE), Lys-212, and 214–216 (KKH). Substrate-binding positions include Glu-223, Arg-244, and 250 to 253 (HIQR).

It belongs to the phosphofructokinase type A (PFKA) family. ATP-dependent PFK group I subfamily. Prokaryotic clade 'B1' sub-subfamily. Homotetramer. Mg(2+) serves as cofactor.

It is found in the cytoplasm. The catalysed reaction is beta-D-fructose 6-phosphate + ATP = beta-D-fructose 1,6-bisphosphate + ADP + H(+). It participates in carbohydrate degradation; glycolysis; D-glyceraldehyde 3-phosphate and glycerone phosphate from D-glucose: step 3/4. Allosterically activated by ADP and other diphosphonucleosides, and allosterically inhibited by phosphoenolpyruvate. Catalyzes the phosphorylation of D-fructose 6-phosphate to fructose 1,6-bisphosphate by ATP, the first committing step of glycolysis. This chain is ATP-dependent 6-phosphofructokinase, found in Salmonella agona (strain SL483).